The following is a 152-amino-acid chain: Large ribosomal subunit protein uL13 (152 aa).

It belongs to the universal ribosomal protein uL13 family. Part of the 50S ribosomal subunit.

This protein is one of the early assembly proteins of the 50S ribosomal subunit, although it is not seen to bind rRNA by itself. It is important during the early stages of 50S assembly. The polypeptide is Large ribosomal subunit protein uL13 (Neorickettsia sennetsu (strain ATCC VR-367 / Miyayama) (Ehrlichia sennetsu)).